The primary structure comprises 565 residues: Adenine deaminase (565 aa).

The protein belongs to the metallo-dependent hydrolases superfamily. Adenine deaminase family. It depends on Mn(2+) as a cofactor.

The catalysed reaction is adenine + H2O + H(+) = hypoxanthine + NH4(+). The protein is Adenine deaminase of Methylobacterium nodulans (strain LMG 21967 / CNCM I-2342 / ORS 2060).